A 202-amino-acid chain; its full sequence is Dephospho-CoA kinase (202 aa).

A DPCK domain is found at 4 to 200 (VVGVTGGIGS…QRYLAATVAQ (197 aa)). 12–17 (GSGKSA) lines the ATP pocket.

This sequence belongs to the CoaE family.

It localises to the cytoplasm. It carries out the reaction 3'-dephospho-CoA + ATP = ADP + CoA + H(+). It participates in cofactor biosynthesis; coenzyme A biosynthesis; CoA from (R)-pantothenate: step 5/5. Functionally, catalyzes the phosphorylation of the 3'-hydroxyl group of dephosphocoenzyme A to form coenzyme A. The sequence is that of Dephospho-CoA kinase from Idiomarina loihiensis (strain ATCC BAA-735 / DSM 15497 / L2-TR).